Reading from the N-terminus, the 207-residue chain is PITH domain-containing protein P35G2.02 (207 aa).

Residues 13 to 189 enclose the PITH domain; that stretch reads EHPFESGPND…PVVTIYEATP (177 aa).

The protein belongs to the PITHD1 family.

Its subcellular location is the cytoplasm. The protein localises to the nucleus. The chain is PITH domain-containing protein P35G2.02 from Schizosaccharomyces pombe (strain 972 / ATCC 24843) (Fission yeast).